Consider the following 522-residue polypeptide: Zinc finger protein 329 (522 aa).

Ser-30 bears the Phosphoserine mark. C2H2-type zinc fingers lie at residues 184 to 206 (YKCAECGKCFKRNSSLVLHHRTH), 212 to 234 (YTCNDCGKSFSKNYNLIVHRRIH), 240 to 262 (YKCSKCGKAFSDGSALTQHQRIH), 268 to 290 (YACLDCGKTFNRNSSLILHQRTH), 296 to 318 (YRCNECGKPFTDISHLTVHLRIH), 324 to 346 (YECSRCGKAFRDGSYLTQHERTH), 352 to 374 (FECVECGKSFSRNSHLIVHQKIH), 380 to 402 (YECKECGKTFIESAYLIRHQRVH), 408 to 430 (YGCNQCRKLFRNIAGLIRHQRIH), 436 to 458 (YECNQCGKAFRDSSCLTKHQRIH), 464 to 486 (YQCLKCGKSFRQNTHLVVHQRLH), and 492 to 514 (SQCPHCGKIFRRSWCLARHQRTH).

Belongs to the krueppel C2H2-type zinc-finger protein family.

The protein resides in the nucleus. In terms of biological role, may be involved in transcriptional regulation. This chain is Zinc finger protein 329 (Znf329), found in Mus musculus (Mouse).